A 208-amino-acid chain; its full sequence is 3-demethoxyubiquinol 3-hydroxylase (208 aa).

Fe cation-binding residues include Glu57, Glu87, His90, Glu139, Glu171, and His174.

This sequence belongs to the COQ7 family. Fe cation serves as cofactor.

Its subcellular location is the cell membrane. The enzyme catalyses a 5-methoxy-2-methyl-3-(all-trans-polyprenyl)benzene-1,4-diol + AH2 + O2 = a 3-demethylubiquinol + A + H2O. It functions in the pathway cofactor biosynthesis; ubiquinone biosynthesis. Its function is as follows. Catalyzes the hydroxylation of 2-nonaprenyl-3-methyl-6-methoxy-1,4-benzoquinol during ubiquinone biosynthesis. In Nitrosomonas europaea (strain ATCC 19718 / CIP 103999 / KCTC 2705 / NBRC 14298), this protein is 3-demethoxyubiquinol 3-hydroxylase.